The sequence spans 170 residues: MSTLRIPIALQQAVMQCLRHYLQLANQHLGTAYPEPKINYHQRGTNAGSAYLQSFEIRLNPVLLLENKQPFIDEVVPHELAHLLVYRQFDRVAPHGKEWRWMMEQVLKVPASRTHQFEVASVRSKTFNYQCKCQQHALTIRRHNKVLRGESEYRCRQCGEKLQFITINPD.

The SprT-like domain maps to 22–165; that stretch reads LQLANQHLGT…RQCGEKLQFI (144 aa). Residue H78 participates in Zn(2+) binding. E79 is an active-site residue. H82 contacts Zn(2+).

Belongs to the SprT family. Zn(2+) serves as cofactor.

The protein resides in the cytoplasm. The protein is Protein SprT of Yersinia pseudotuberculosis serotype IB (strain PB1/+).